The sequence spans 253 residues: Methionine-R-sulfoxide reductase B3, mitochondrial (253 aa).

The first 56 residues, Met-1–Ala-56, serve as a signal peptide directing secretion. Residue Lys-102 is modified to N6-acetyllysine. A MsrB domain is found at Gln-107 to Ala-229. Zn(2+) is bound by residues Cys-146, Cys-149, Cys-195, and Cys-198. Cys-218 acts as the Nucleophile in catalysis. The interval Thr-227–Leu-253 is disordered. Ser-244 bears the Phosphoserine mark. Residues Arg-250–Leu-253 carry the Endoplasmic reticulum retention signal motif.

This sequence belongs to the MsrB Met sulfoxide reductase family. As to quaternary structure, monomer. Zn(2+) serves as cofactor. Widely expressed. Detected in the sensory epithelia of the organ of Corti and vestibular end organs as early as P2 up to adulthood (at protein level). In the organ of Corti, present in inner and outer hair cells and, to a lesser extent, in supporting cells (at protein level). In hair cells, distributed throughout the cell body. Barely detectable level in stereocilia. Also observed in spiral ganglion neurons, but not in the stria vascularis. In the vestibular end organs, found throughout the sensory epithelium, but more intense expression in hair cells than in supporting cells (at protein level). In vestibular hair cells, present within cell bodies and to a lesser extent in kinocilia. Barely detectable in stereocilia.

Its subcellular location is the endoplasmic reticulum. It catalyses the reaction L-methionyl-[protein] + [thioredoxin]-disulfide + H2O = L-methionyl-(R)-S-oxide-[protein] + [thioredoxin]-dithiol. The enzyme catalyses [thioredoxin]-disulfide + L-methionine + H2O = L-methionine (R)-S-oxide + [thioredoxin]-dithiol. In terms of biological role, catalyzes the reduction of free and protein-bound methionine sulfoxide to methionine. The protein is Methionine-R-sulfoxide reductase B3, mitochondrial (Msrb3) of Mus musculus (Mouse).